The chain runs to 265 residues: Synaptoporin (265 aa).

Residues 1 to 4 (MCMV) lie on the Cytoplasmic side of the membrane. Positions 1 to 202 (MCMVIFAPLF…NIWFVFKETG (202 aa)) constitute an MARVEL domain. The chain crosses the membrane as a helical span at residues 5 to 25 (IFAPLFAMFAFATCGGYSGGL). Over 26-81 (RLSVDCVNKTESNLSIDIAFAYPFRLQQVTFEVPTCEGKEQQKLALVGDSSSSAEF) the chain is Vesicular. N-linked (GlcNAc...) asparagine glycans are attached at residues Asn-33 and Asn-38. A helical transmembrane segment spans residues 82-102 (FVTVAVFAFLYSLAATVVYIF). Residues 103–114 (FQNKYRENNRGP) are Cytoplasmic-facing. The chain crosses the membrane as a helical span at residues 115 to 135 (LIDFIVTVVFSFLWLVGSSAW). The Vesicular portion of the chain corresponds to 136–177 (AKGLSDVKVATDPKEVLLLMSACKQPSNKCMAVHSPVMSSLN). The helical transmembrane segment at 178–198 (TSVVFGFLNFILWAGNIWFVF) threads the bilayer. Over 199 to 265 (KETGWHSSGQ…SGPTSFNNQI (67 aa)) the chain is Cytoplasmic. Tandem repeats lie at residues 210–214 (YLSDP), 222–226 (YNQGR), 227–231 (YNQES), 232–236 (YGSSG), and 238–242 (YSQQA). The segment at 210–242 (YLSDPMEKHSSSYNQGRYNQESYGSSGGYSQQA) is 5 X approximate repeats. Residue Ser-212 is modified to Phosphoserine. Polar residues predominate over residues 221–230 (SYNQGRYNQE). Residues 221–265 (SYNQGRYNQESYGSSGGYSQQANLGPTSDEFGQQPSGPTSFNNQI) form a disordered region. The segment covering 240–265 (QQANLGPTSDEFGQQPSGPTSFNNQI) has biased composition (polar residues).

It belongs to the synaptophysin/synaptobrevin family.

The protein localises to the cytoplasmic vesicle. It is found in the secretory vesicle. Its subcellular location is the synaptic vesicle membrane. It localises to the synapse. The protein resides in the synaptosome. Intrinsic membrane protein of small synaptic vesicles. Probable vesicular channel protein. The sequence is that of Synaptoporin (Synpr) from Mus musculus (Mouse).